The chain runs to 575 residues: Flagellin A (575 aa).

Tandem repeats lie at residues 405–409 (GSGFS), 411–415 (GSGFS), and 447–450 (GSGF).

The protein belongs to the bacterial flagellin family. As to quaternary structure, heteromer of flaA and flaB.

The protein localises to the secreted. It is found in the bacterial flagellum. Flagellin is the subunit protein which polymerizes to form the filaments of bacterial flagella. The sequence is that of Flagellin A (flaA) from Campylobacter jejuni.